A 129-amino-acid chain; its full sequence is Small ribosomal subunit protein uS11 (129 aa).

It belongs to the universal ribosomal protein uS11 family. Part of the 30S ribosomal subunit. Interacts with proteins S7 and S18. Binds to IF-3.

Located on the platform of the 30S subunit, it bridges several disparate RNA helices of the 16S rRNA. Forms part of the Shine-Dalgarno cleft in the 70S ribosome. This Bradyrhizobium diazoefficiens (strain JCM 10833 / BCRC 13528 / IAM 13628 / NBRC 14792 / USDA 110) protein is Small ribosomal subunit protein uS11.